Consider the following 379-residue polypeptide: Succinyl-diaminopimelate desuccinylase (379 aa).

Histidine 70 contributes to the Zn(2+) binding site. The active site involves aspartate 72. Aspartate 103 is a binding site for Zn(2+). Glutamate 137 acts as the Proton acceptor in catalysis. Residues glutamate 138, glutamate 166, and histidine 352 each coordinate Zn(2+).

This sequence belongs to the peptidase M20A family. DapE subfamily. Homodimer. It depends on Zn(2+) as a cofactor. Co(2+) is required as a cofactor.

It catalyses the reaction N-succinyl-(2S,6S)-2,6-diaminopimelate + H2O = (2S,6S)-2,6-diaminopimelate + succinate. Its pathway is amino-acid biosynthesis; L-lysine biosynthesis via DAP pathway; LL-2,6-diaminopimelate from (S)-tetrahydrodipicolinate (succinylase route): step 3/3. Catalyzes the hydrolysis of N-succinyl-L,L-diaminopimelic acid (SDAP), forming succinate and LL-2,6-diaminopimelate (DAP), an intermediate involved in the bacterial biosynthesis of lysine and meso-diaminopimelic acid, an essential component of bacterial cell walls. This chain is Succinyl-diaminopimelate desuccinylase, found in Shewanella baltica (strain OS223).